A 499-amino-acid polypeptide reads, in one-letter code: Importin subunit alpha-8 (499 aa).

The IBB domain maps to 1–57 (MATSKAPKERLKNYKYRGKEMSLPRQQRIASSLQLRKTRKDEQVLKRRNIDLFSSDM). 8 ARM repeats span residues 101–141 (TPPL…NIAS), 144–183 (SEQT…NIAG), 186–226 (AEFR…NLCR), 229–268 (DPYP…YLTK), 271–310 (KEYI…NIVA), 313–352 (DEQT…NVAA), 354–393 (PRHQ…NIAT), and 397–436 (QDQL…YLLQ).

Belongs to the importin alpha family. As to quaternary structure, binds to importin subunit beta-1/KPNB1 via the IBB domain; this complex dissociates in the presence of RAN-GTP. Shows a limited binding to the RB1 nuclear localization signal (NLS), but not to the SV40, nor NPM1 NLSs. Interacts with RSL1D1. In terms of tissue distribution, expressed predominantly in ovary. Isoform 1 is the predominant form.

The protein resides in the nucleus. In terms of biological role, functions in nuclear protein import. This chain is Importin subunit alpha-8 (Kpna7), found in Mus musculus (Mouse).